The chain runs to 364 residues: Inactive protein RESTRICTED TEV MOVEMENT 2 (364 aa).

Residues valine 14–alanine 121 enclose the sHSP domain. Residues leucine 129 to arginine 133 form an A-1 repeat. The 6 X 5 AA repeats A of L-E-E-[SKR]-[ERK] stretch occupies residues leucine 129–lysine 220. The stretch at leucine 135–arginine 139 is one A-2 repeat. An A-3 repeat occupies leucine 156 to glutamate 160. The B-1 repeat unit spans residues isoleucine 163 to alanine 176. Positions isoleucine 163–leucine 206 are 3 X 14 AA repeats B of [IMA]-[RK]-K-L-Q-E-E-A-K-A-K-E-[EK]-[LA]. Residues methionine 178–alanine 191 form a B-2 repeat. One copy of the B-3 repeat lies at alanine 193–lysine 205. Residues leucine 206 to lysine 210 form an A-4 repeat. The stretch at leucine 211 to arginine 215 is one A-5 repeat. One copy of the A-6 repeat lies at leucine 216–lysine 220. The chain crosses the membrane as a helical span at residues leucine 322–tyrosine 342. The interval cysteine 345–glutamate 364 is disordered. Over residues serine 346 to glutamate 364 the composition is skewed to low complexity.

It belongs to the small heat shock protein (HSP20) family.

It is found in the cell membrane. Its function is as follows. Seems to not be involved in heat resistance. Unable to mediate restriction of long-distance movement of the pathogenic tobacco etch virus (TEV) without causing a hypersensitive response or inducing systemic acquired resistance. The sequence is that of Inactive protein RESTRICTED TEV MOVEMENT 2 (RTM2) from Arabidopsis thaliana (Mouse-ear cress).